The following is a 204-amino-acid chain: FMN-dependent NADH:quinone oxidoreductase 5 (204 aa).

Position 10 (Ser-10) interacts with FMN.

It belongs to the azoreductase type 1 family. As to quaternary structure, homodimer. It depends on FMN as a cofactor.

The catalysed reaction is 2 a quinone + NADH + H(+) = 2 a 1,4-benzosemiquinone + NAD(+). It carries out the reaction N,N-dimethyl-1,4-phenylenediamine + anthranilate + 2 NAD(+) = 2-(4-dimethylaminophenyl)diazenylbenzoate + 2 NADH + 2 H(+). In terms of biological role, quinone reductase that provides resistance to thiol-specific stress caused by electrophilic quinones. Its function is as follows. Also exhibits azoreductase activity. Catalyzes the reductive cleavage of the azo bond in aromatic azo compounds to the corresponding amines. The sequence is that of FMN-dependent NADH:quinone oxidoreductase 5 from Burkholderia lata (strain ATCC 17760 / DSM 23089 / LMG 22485 / NCIMB 9086 / R18194 / 383).